A 528-amino-acid polypeptide reads, in one-letter code: Cytoplasmic tRNA 2-thiolation protein 2 (528 aa).

Disordered regions lie at residues 1-23 and 196-219; these read MCQA…PRPS and PAQG…GHPK. Residue C2 is modified to N-acetylcysteine. Positions 197–212 are enriched in polar residues; it reads AQGQGQLRPSHSQEPS. Residue S416 is modified to Phosphoserine. The tract at residues 504–528 is disordered; that stretch reads EEEEEDRAEPCEAMKQEAEDKGIGL. Positions 511–528 are enriched in basic and acidic residues; that stretch reads AEPCEAMKQEAEDKGIGL.

It belongs to the CTU2/NCS2 family. In terms of assembly, component of a complex at least composed of URM1, CTU2/NCS2 and CTU1/ATPBD3.

It localises to the cytoplasm. It functions in the pathway tRNA modification; 5-methoxycarbonylmethyl-2-thiouridine-tRNA biosynthesis. Functionally, plays a central role in 2-thiolation of mcm(5)S(2)U at tRNA wobble positions of tRNA(Lys), tRNA(Glu) and tRNA(Gln). May act by forming a heterodimer with CTU1/ATPBD3 that ligates sulfur from thiocarboxylated URM1 onto the uridine of tRNAs at wobble position. This is Cytoplasmic tRNA 2-thiolation protein 2 (Ctu2) from Rattus norvegicus (Rat).